The sequence spans 881 residues: Putative SWI/SNF-related matrix-associated actin-dependent regulator of chromatin subfamily A member 3-like 1 (881 aa).

A Helicase ATP-binding domain is found at 272–486 (DKRPDPLRGG…YSLMAFLRFE (215 aa)). An ATP-binding site is contributed by 285-292 (DDMGLGKT). The segment at 308-343 (STSTPTEEPLDGEGDKIEKKGKKRGRGKSSESVTRK) is disordered. Residues 437 to 440 (DEAH) carry the DEAH box motif. Residues 635-674 (CPICISPPTNIIITRCAHIFCRACILQTLQRSKPLCPLCR) form an RING-type zinc finger. A disordered region spans residues 681-703 (DLYNAPPPPPDSSNTDGEDAKSS). Residues 711–876 (ALLSLLMASR…EREVNVEDVV (166 aa)) form the Helicase C-terminal domain.

It belongs to the SNF2/RAD54 helicase family. RAD16 subfamily.

The protein resides in the nucleus. Its function is as follows. Possesses intrinsic ATP-dependent nucleosome-remodeling activity. This activity may be required for transcriptional activation or repression of specific target promoters. This Arabidopsis thaliana (Mouse-ear cress) protein is Putative SWI/SNF-related matrix-associated actin-dependent regulator of chromatin subfamily A member 3-like 1.